We begin with the raw amino-acid sequence, 265 residues long: Esterase claE (265 aa).

Residues Ser-121, Asp-211, and His-239 each act as charge relay system in the active site.

This sequence belongs to the LovG family.

It functions in the pathway secondary metabolite biosynthesis. Its function is as follows. Esterase; part of the cla gene cluster that produces clavatol and ortho-quinone methide. The clavatol biosynthesis cluster cla and the terrestric acid cluster tra are both involved in the production of peniphenones and penilactones. The non-reducing PKS claF is responsible for the formation of clavatol from successive condensations of 3 malonyl-CoA units, presumably with a simple acetyl-CoA starter unit, and 2 methylation steps. The esterase claE probably collaborates with claF by catalyzing the hydrolysis of ACP-bound acyl intermediates to free the ACP from stalled intermediates. The clavatol oxidase claD then converts clavatol to hydroxyclavatol. Spontaneous dehydration of hydroxyclavatol leads to the accumulation of the highly active ortho-quinone methide. On the other hand, the PKS-NRPS hybrid traA is involved in the formation of crustosic acid, with the help of traB and traD. The polyketide synthase module (PKS) of traA is responsible for the synthesis of the polyketide backbone via the condensation of an acetyl-CoA starter unit with 3 malonyl-CoA units. The downstream nonribosomal peptide synthetase (NRPS) module then amidates the carboxyl end of the polyketide with L-malic acid. Because traA lacks a designated enoylreductase (ER) domain, the required activity is provided the enoyl reductase traG. Crustosic acid undergoes decarboxylation and isomerization to the terrestric acid, catalyzed by the 2-oxoglutarate-dependent dioxygenase traH. Both acids are further converted to the 2 gamma-butyrolactones (R)-5-methyltetronic acid and (S)-5-carboxylmethyltetronic acid, with involvement of the cytochrome P450 monooxygenase claJ. Spontaneous addition of the methide to these gamma-butyrolactones leads to peniphenone D and penilactone D, which undergo again stereospecific attacking by methide to give penilactones A and B. The chain is Esterase claE from Penicillium crustosum (Blue mold fungus).